Reading from the N-terminus, the 222-residue chain is Beta-casein (222 aa).

Residues 1 to 15 (MKVLILACLVALAIA) form the signal peptide. Thr27 bears the Phosphothreonine mark. Ser30, Ser32, Ser33, and Ser34 each carry phosphoserine.

It belongs to the beta-casein family. Mammary gland specific. Secreted in milk.

It is found in the secreted. Functionally, important role in determination of the surface properties of the casein micelles. This chain is Beta-casein (CSN2), found in Capra hircus (Goat).